A 129-amino-acid polypeptide reads, in one-letter code: Small ribosomal subunit protein uS11 (129 aa).

The protein belongs to the universal ribosomal protein uS11 family. In terms of assembly, part of the 30S ribosomal subunit. Interacts with proteins S7 and S18. Binds to IF-3.

Located on the platform of the 30S subunit, it bridges several disparate RNA helices of the 16S rRNA. Forms part of the Shine-Dalgarno cleft in the 70S ribosome. The protein is Small ribosomal subunit protein uS11 of Sodalis glossinidius (strain morsitans).